The sequence spans 204 residues: Octanoyltransferase (204 aa).

Residues 27-202 enclose the BPL/LPL catalytic domain; it reads QGGEEALLLL…RFQPFLHLHL (176 aa). Residues 65–72, 132–134, and 145–147 each bind substrate; these read RGGDVTYH, SIG, and GFA. Cys163 (acyl-thioester intermediate) is an active-site residue.

The protein belongs to the LipB family.

It localises to the cytoplasm. The catalysed reaction is octanoyl-[ACP] + L-lysyl-[protein] = N(6)-octanoyl-L-lysyl-[protein] + holo-[ACP] + H(+). Its pathway is protein modification; protein lipoylation via endogenous pathway; protein N(6)-(lipoyl)lysine from octanoyl-[acyl-carrier-protein]: step 1/2. Its function is as follows. Catalyzes the transfer of endogenously produced octanoic acid from octanoyl-acyl-carrier-protein onto the lipoyl domains of lipoate-dependent enzymes. Lipoyl-ACP can also act as a substrate although octanoyl-ACP is likely to be the physiological substrate. This Geobacter sp. (strain M21) protein is Octanoyltransferase.